A 977-amino-acid chain; its full sequence is Collagen alpha-2(I) chain (977 aa).

The interval 1–977 (SGGFDFSFLP…RGSQGSQGPS (977 aa)) is disordered. 4-hydroxyproline is present on residues proline 10, proline 13, proline 28, and proline 34. The segment covering 17–66 (GPMGLMGPRGPPGASGAPGPQGFQGPAGEPGEPGQTGPAGARGPAGPPGK) has biased composition (low complexity). Lysine 91 carries the 5-hydroxylysine; alternate modification. O-linked (Gal...) hydroxylysine; alternate glycosylation is present at lysine 91. Low complexity-rich tracts occupy residues 138–159 (SRGS…SAGP) and 205–226 (PGAN…AGAP). A compositionally biased stretch (gly residues) spans 258–267 (GESGGKGEPG). Residues 268–278 (SAGPQGPPGSS) are compositionally biased toward low complexity. Positions 300–309 (GLRGGPGSRG) are enriched in gly residues. The span at 322-338 (PAGARGASGPAGVRGPS) shows a compositional bias: low complexity. 4-hydroxyproline is present on residues proline 344 and proline 347. Low complexity predominate over residues 373–392 (LPGIDGRPGPIGPAGARGEA). The span at 441–450 (GVQGGKGEQG) shows a compositional bias: gly residues. Composition is skewed to low complexity over residues 497 to 514 (SGES…SRGP) and 526 to 536 (EPGVVGAPGTA). Positions 537-546 (GPAGSGGLPG) are enriched in gly residues. 2 stretches are compositionally biased toward low complexity: residues 569-605 (VGTT…AGPA) and 620-640 (VGPA…QPGA). Residues 641 to 650 (KGERGTKGPK) are compositionally biased toward basic and acidic residues. A compositionally biased stretch (low complexity) spans 658-668 (PTGPVGSAGPA). The span at 678-687 (GSRGDGGPPG) shows a compositional bias: gly residues. Residues 689–698 (TGFPGAAGRT) show a composition bias toward low complexity. The span at 735 to 744 (GETGAGGPPG) shows a compositional bias: gly residues. Low complexity-rich tracts occupy residues 752-779 (SGEP…LGLP) and 787-797 (LPGVAGAVGEP). Positions 798–817 (GPLGIGPPGARGPSGAGVNG) are enriched in gly residues. 2 stretches are compositionally biased toward low complexity: residues 853 to 871 (PVGA…PAGK) and 878 to 898 (PGPA…PSGP). Over residues 902-913 (RGDKGEAGDKGP) the composition is skewed to basic and acidic residues.

It belongs to the fibrillar collagen family. As to quaternary structure, trimers of one alpha 2(I) and two alpha 1(I) chains. Interacts (via C-terminus) with TMEM131 (via PapD-L domain); the interaction is direct and is involved in assembly and TRAPPIII ER-to-Golgi transport complex-dependent secretion of collagen. Prolines at the third position of the tripeptide repeating unit (G-X-Y) are hydroxylated in some or all of the chains. Expressed in bones.

Its subcellular location is the secreted. The protein localises to the extracellular space. The protein resides in the extracellular matrix. In terms of biological role, type I collagen is a member of group I collagen (fibrillar forming collagen). This Scelidodon sp. (strain SLP-2019) (South American ground sloth) protein is Collagen alpha-2(I) chain.